The following is a 227-amino-acid chain: DNA utilization protein YhgH (227 aa).

The protein belongs to the ComF/GntX family.

Its function is as follows. Required for the use of extracellular DNA as a nutrient. Has been suggested to be involved in gluconate metabolism. This Escherichia coli (strain K12) protein is DNA utilization protein YhgH.